The sequence spans 390 residues: 8-amino-7-oxononanoate synthase (390 aa).

Substrate is bound at residue Arg20. 107–108 is a pyridoxal 5'-phosphate binding site; the sequence is GF. His132 is a binding site for substrate. Residues Ser179, 204–207, and 235–238 each bind pyridoxal 5'-phosphate; these read DDAH and TLSK. Lys238 carries the post-translational modification N6-(pyridoxal phosphate)lysine. Residue Thr352 participates in substrate binding.

This sequence belongs to the class-II pyridoxal-phosphate-dependent aminotransferase family. BioF subfamily. In terms of assembly, homodimer. It depends on pyridoxal 5'-phosphate as a cofactor.

The catalysed reaction is 6-carboxyhexanoyl-[ACP] + L-alanine + H(+) = (8S)-8-amino-7-oxononanoate + holo-[ACP] + CO2. It functions in the pathway cofactor biosynthesis; biotin biosynthesis. In terms of biological role, catalyzes the decarboxylative condensation of pimeloyl-[acyl-carrier protein] and L-alanine to produce 8-amino-7-oxononanoate (AON), [acyl-carrier protein], and carbon dioxide. The protein is 8-amino-7-oxononanoate synthase of Exiguobacterium sibiricum (strain DSM 17290 / CCUG 55495 / CIP 109462 / JCM 13490 / 255-15).